Here is a 317-residue protein sequence, read N- to C-terminus: MKQFVRPEFILLKEGQDKNYGKFSVSPLERGFGITLGNAIRRTLLAATPGASVYAIKIAGATHEFTSIPGIIENVTKIILNIKQLVLKIDTSIYSDDEVVQLRIRSDIQGPIYAGDLDIPAGVEILNKDLLIATISEGGVLDLVLYAKNSRGYKTFKDNKNEKNIEPGMITIDSNYSPIIKVAYSVDSAKIGRAIDLEKLELEVTTDGSITAIDAISIASRILVAHLEFFIDLNREISVLEVIGTNQTDDKELDRTVEELDFTQRSLNCLKRAGINTLRELVSKNEDEIGSIRNLGRKSLKEIKDKVASLGLAFRQS.

The segment at 1–234 (MKQFVRPEFI…AHLEFFIDLN (234 aa)) is alpha N-terminal domain (alpha-NTD). The segment at 250-317 (DKELDRTVEE…ASLGLAFRQS (68 aa)) is alpha C-terminal domain (alpha-CTD).

This sequence belongs to the RNA polymerase alpha chain family. Homodimer. The RNAP catalytic core consists of 2 alpha, 1 beta, 1 beta' and 1 omega subunit. When a sigma factor is associated with the core the holoenzyme is formed, which can initiate transcription.

The catalysed reaction is RNA(n) + a ribonucleoside 5'-triphosphate = RNA(n+1) + diphosphate. DNA-dependent RNA polymerase catalyzes the transcription of DNA into RNA using the four ribonucleoside triphosphates as substrates. This chain is DNA-directed RNA polymerase subunit alpha, found in Mycoplasma mycoides subsp. mycoides SC (strain CCUG 32753 / NCTC 10114 / PG1).